A 293-amino-acid polypeptide reads, in one-letter code: Elongation factor Ts (293 aa).

The involved in Mg(2+) ion dislocation from EF-Tu stretch occupies residues 80 to 83; the sequence is TDFV.

This sequence belongs to the EF-Ts family.

It is found in the cytoplasm. In terms of biological role, associates with the EF-Tu.GDP complex and induces the exchange of GDP to GTP. It remains bound to the aminoacyl-tRNA.EF-Tu.GTP complex up to the GTP hydrolysis stage on the ribosome. The chain is Elongation factor Ts from Aeromonas hydrophila subsp. hydrophila (strain ATCC 7966 / DSM 30187 / BCRC 13018 / CCUG 14551 / JCM 1027 / KCTC 2358 / NCIMB 9240 / NCTC 8049).